The chain runs to 288 residues: ATP synthase gamma chain (288 aa).

It belongs to the ATPase gamma chain family. F-type ATPases have 2 components, CF(1) - the catalytic core - and CF(0) - the membrane proton channel. CF(1) has five subunits: alpha(3), beta(3), gamma(1), delta(1), epsilon(1). CF(0) has three main subunits: a, b and c.

The protein resides in the cell inner membrane. Produces ATP from ADP in the presence of a proton gradient across the membrane. The gamma chain is believed to be important in regulating ATPase activity and the flow of protons through the CF(0) complex. In Aliivibrio fischeri (strain ATCC 700601 / ES114) (Vibrio fischeri), this protein is ATP synthase gamma chain.